Here is a 323-residue protein sequence, read N- to C-terminus: MEDNEENKEKKTTLEDLPGVGEATAEKLRENGYDDIMAIAVASPKDLSDVTGIGEGAAAKIIAAARKFADIGNFETGEEILERRKTIQKLTTGSKNLDDLLGGGLETQAITEFFGEFGSGKTQIMHQLAVNCTMPKEKGGFDSDVMMIDTENTFRPERIIQMAKSKGLDPDETLKRIHVARAYNSHHQILLAEKAQETAKEFNIRLLIVDSLTAHFRSEYVGRGSLAERQQLLNKHMHDLLRFGTIYNAVIAVTNQVSARPDVFFGDPMAPIGGNIVGHTATFRVYLRKSKGGKRIARLIDSPYLPEGETVIQISEEGVNDGT.

Residue 115–122 coordinates ATP; sequence GEFGSGKT.

This sequence belongs to the eukaryotic RecA-like protein family.

Its function is as follows. Involved in DNA repair and in homologous recombination. Binds and assemble on single-stranded DNA to form a nucleoprotein filament. Hydrolyzes ATP in a ssDNA-dependent manner and promotes DNA strand exchange between homologous DNA molecules. The sequence is that of DNA repair and recombination protein RadA from Thermoplasma volcanium (strain ATCC 51530 / DSM 4299 / JCM 9571 / NBRC 15438 / GSS1).